The following is a 371-amino-acid chain: Transcriptional regulator of yeast form adherence 2 (371 aa).

The C3H1-type 1 zinc-finger motif lies at 16–44 (RNPAVLCSFYSKIGACRHGEKCSKKHLKP). Residues 94–107 (TVSQIDDSPHSNSG) are compositionally biased toward polar residues. A disordered region spans residues 94–194 (TVSQIDDSPH…NIEDAKLEDT (101 aa)). A compositionally biased stretch (acidic residues) spans 115–124 (VETQEVETEN). Basic and acidic residues predominate over residues 132–194 (GDVKIDHNED…NIEDAKLEDT (63 aa)). The 88-residue stretch at 192–279 (EDTEKDKLPE…KPVYSDLSPV (88 aa)) folds into the RRM domain. Residues 281-309 (DFNDACCEEYRDYHDCQRGAMCNYMHVRL) form a C3H1-type 2 zinc finger. The tract at residues 337 to 371 (ELPGDIRSSSSTNDDETNGNENGISSTMAVLEQLS) is disordered. Residues 355-371 (GNENGISSTMAVLEQLS) are compositionally biased toward polar residues.

The protein resides in the nucleus. Its function is as follows. Transcription factor required for yeast cell adherence to silicone substrate. In Candida albicans (strain SC5314 / ATCC MYA-2876) (Yeast), this protein is Transcriptional regulator of yeast form adherence 2 (TRY2).